Here is a 415-residue protein sequence, read N- to C-terminus: Erythronolide mycarosyltransferase (415 aa).

It belongs to the glycosyltransferase 28 family.

It catalyses the reaction dTDP-beta-L-mycarose + erythronolide B = 3-O-alpha-L-mycarosylerythronolide B + dTDP + H(+). Functionally, involved in the biosynthesis of the macrolide antibiotic erythromycin. Catalyzes the reversible transfer of mycarosyl from dTDP-beta-L-mycarose to erythronolide B to yield 3-alpha-L-mycarosylerythronolide B. It can also use TDP-beta-L-cladinose. This chain is Erythronolide mycarosyltransferase, found in Saccharopolyspora erythraea (Streptomyces erythraeus).